An 86-amino-acid chain; its full sequence is Neurotoxin-like protein pMD18-NTL1/2/4/5 (86 aa).

The N-terminal stretch at 1–21 (MKTLLLTLVVLTIACLDLGYT) is a signal peptide. Cystine bridges form between Cys24–Cys45, Cys38–Cys62, Cys66–Cys78, and Cys79–Cys84.

Belongs to the three-finger toxin family. Short-chain subfamily. Orphan group IX sub-subfamily. Expressed by the venom gland.

The protein localises to the secreted. The sequence is that of Neurotoxin-like protein pMD18-NTL1/2/4/5 from Bungarus multicinctus (Many-banded krait).